Consider the following 594-residue polypeptide: Transcription factor TFIIIB component B'' (594 aa).

The tract at residues 1–169 (MSSIVNKSGT…ARRLSTISNK (169 aa)) is disordered. Residue S49 is modified to Phosphoserine. Residues 150-168 (LDSSSNSNGTARRLSTISN) show a composition bias toward polar residues. The residue at position 178 (S178) is a Phosphoserine. 2 disordered regions span residues 217–245 (SPPT…DENE) and 317–343 (ARQE…KEER). Basic and acidic residues-rich tracts occupy residues 225–241 (SLDR…SREA) and 317–330 (ARQE…LTKE). Positions 415 to 466 (SYTDPWTVEEMIKFYKALSMWGTDFNLISQLYPYRSRKQVKAKFVNEEKKRP) constitute an SANT domain. A compositionally biased stretch (basic and acidic residues) spans 520–529 (KNTAKEEDQT). Disordered regions lie at residues 520–547 (KNTA…GGIM) and 567–594 (LKRK…EIDQ). The segment covering 579-594 (DNEDNEGSEEEPEIDQ) has biased composition (acidic residues).

It belongs to the TFC5 family. As to quaternary structure, TFIIIB comprises the TATA-binding protein (TBP), the B-related factor (BRF) and the B'' component (BDP1). Interacts with TFC4.

Its subcellular location is the nucleus. General activator of RNA polymerase III transcription. The protein is Transcription factor TFIIIB component B'' (BDP1) of Saccharomyces cerevisiae (strain ATCC 204508 / S288c) (Baker's yeast).